Consider the following 274-residue polypeptide: N-acetylmuramic acid 6-phosphate etherase (274 aa).

The region spanning 52-215 (IVPRMEQGGR…STSIMIRLGR (164 aa)) is the SIS domain. The active-site Proton donor is Glu-80. Glu-111 is a catalytic residue.

Belongs to the GCKR-like family. MurNAc-6-P etherase subfamily. As to quaternary structure, homodimer.

It catalyses the reaction N-acetyl-D-muramate 6-phosphate + H2O = N-acetyl-D-glucosamine 6-phosphate + (R)-lactate. The protein operates within amino-sugar metabolism; N-acetylmuramate degradation. Functionally, specifically catalyzes the cleavage of the D-lactyl ether substituent of MurNAc 6-phosphate, producing GlcNAc 6-phosphate and D-lactate. This Porphyromonas gingivalis (strain ATCC 33277 / DSM 20709 / CIP 103683 / JCM 12257 / NCTC 11834 / 2561) protein is N-acetylmuramic acid 6-phosphate etherase.